A 415-amino-acid polypeptide reads, in one-letter code: Nacrein-like protein F (415 aa).

Asparagine 27 is a glycosylation site (N-linked (GlcNAc...) asparagine). The 382-residue stretch at 33–414 folds into the Alpha-carbonic anhydrase domain; that stretch reads AGFSYDRSIC…KNKVTVYKSF (382 aa). Zn(2+) contacts are provided by histidine 132, histidine 134, and histidine 157. Positions 201 to 297 are disordered; that stretch reads DEPDDEECKH…GENGHKHGCR (97 aa). A compositionally biased stretch (basic and acidic residues) spans 207–219; sequence ECKHILKGHHPDN. Positions 220-289 are enriched in low complexity; it reads NENGNGDNGN…NNGENGNNGE (70 aa). Tandem repeats lie at residues 225-227, 228-230, 231-233, 234-236, 237-239, 240-242, 243-245, 246-248, 249-251, 252-254, 255-257, 258-260, 261-263, 264-266, 267-269, 270-272, 273-275, 276-278, 279-281, 282-284, 285-286, and 288-290. The segment at 225–290 is 22 X 3 AA approximate tandem repeats of G-X-N; it reads GDNGNNGYNG…NGENGNNGEN (66 aa). 355–356 lines the substrate pocket; that stretch reads TT.

It belongs to the alpha-carbonic anhydrase family. As to quaternary structure, homooligomer; disulfide-linked. May also be disulfide-linked to insoluble organic matrix. Requires Zn(2+) as cofactor. As to expression, expressed in the mantle.

It localises to the secreted. The protein resides in the extracellular space. Its subcellular location is the extracellular matrix. The enzyme catalyses hydrogencarbonate + H(+) = CO2 + H2O. In terms of biological role, acts as a negative regulator for calcification in the shells of mollusks. May function both as a calcium concentrator and as a carbonic anhydrase required for production of carbonate ions, which are assembled to CaCO(3) at mineralization sites. Is important for shell formation in both the calcitic prismatic layer and the aragonitic nacreous layer. Shows inhibitory activity of crystal formation when present in free state but, when attached to the insoluble matrix, may regulate the form and size of aragonite crystal. This chain is Nacrein-like protein F, found in Pinctada fucata (Akoya pearl oyster).